The chain runs to 1026 residues: Exportin-T (1026 aa).

This sequence belongs to the exportin family.

It is found in the nucleus. The protein localises to the cytoplasm. Its function is as follows. tRNA nucleus export receptor which facilitates tRNA translocation across the nuclear pore complex. Involved in pre-tRNA splicing, probably by affecting the interaction of pre-tRNA with splicing endonuclease. This chain is Exportin-T (los1), found in Aspergillus oryzae (strain ATCC 42149 / RIB 40) (Yellow koji mold).